A 111-amino-acid polypeptide reads, in one-letter code: ATP-dependent Clp protease adapter protein ClpS (111 aa).

The protein belongs to the ClpS family. Binds to the N-terminal domain of the chaperone ClpA.

Involved in the modulation of the specificity of the ClpAP-mediated ATP-dependent protein degradation. This is ATP-dependent Clp protease adapter protein ClpS from Corynebacterium aurimucosum (strain ATCC 700975 / DSM 44827 / CIP 107346 / CN-1) (Corynebacterium nigricans).